The chain runs to 317 residues: Beta-ketoacyl-[acyl-carrier-protein] synthase III (317 aa).

Residues Cys112 and His244 contribute to the active site. Residues Gln245 to Arg249 form an ACP-binding region. Residue Asn274 is part of the active site.

Belongs to the thiolase-like superfamily. FabH family. As to quaternary structure, homodimer.

The protein localises to the cytoplasm. It carries out the reaction malonyl-[ACP] + acetyl-CoA + H(+) = 3-oxobutanoyl-[ACP] + CO2 + CoA. The protein operates within lipid metabolism; fatty acid biosynthesis. Catalyzes the condensation reaction of fatty acid synthesis by the addition to an acyl acceptor of two carbons from malonyl-ACP. Catalyzes the first condensation reaction which initiates fatty acid synthesis and may therefore play a role in governing the total rate of fatty acid production. Possesses both acetoacetyl-ACP synthase and acetyl transacylase activities. Its substrate specificity determines the biosynthesis of branched-chain and/or straight-chain of fatty acids. The sequence is that of Beta-ketoacyl-[acyl-carrier-protein] synthase III from Aliivibrio fischeri (strain ATCC 700601 / ES114) (Vibrio fischeri).